The primary structure comprises 668 residues: UvrABC system protein B (668 aa).

The region spanning 31 to 188 (HGIEAGEKAQ…RKLVNIQFER (158 aa)) is the Helicase ATP-binding domain. 44-51 (GATGTGKT) is an ATP binding site. Positions 97-120 (YYDYYQPEAYVPSSDTYIEKDSSI) match the Beta-hairpin motif. Residues 435 to 601 (QMDDLVGEIN…TIIKPIRDLI (167 aa)) form the Helicase C-terminal domain. Residues 630–665 (EKLIARLEDEMRAAAKKLDFEQAASLRDTIMDMKTE) form the UVR domain.

This sequence belongs to the UvrB family. As to quaternary structure, forms a heterotetramer with UvrA during the search for lesions. Interacts with UvrC in an incision complex.

It localises to the cytoplasm. The UvrABC repair system catalyzes the recognition and processing of DNA lesions. A damage recognition complex composed of 2 UvrA and 2 UvrB subunits scans DNA for abnormalities. Upon binding of the UvrA(2)B(2) complex to a putative damaged site, the DNA wraps around one UvrB monomer. DNA wrap is dependent on ATP binding by UvrB and probably causes local melting of the DNA helix, facilitating insertion of UvrB beta-hairpin between the DNA strands. Then UvrB probes one DNA strand for the presence of a lesion. If a lesion is found the UvrA subunits dissociate and the UvrB-DNA preincision complex is formed. This complex is subsequently bound by UvrC and the second UvrB is released. If no lesion is found, the DNA wraps around the other UvrB subunit that will check the other stand for damage. This is UvrABC system protein B from Levilactobacillus brevis (strain ATCC 367 / BCRC 12310 / CIP 105137 / JCM 1170 / LMG 11437 / NCIMB 947 / NCTC 947) (Lactobacillus brevis).